A 405-amino-acid polypeptide reads, in one-letter code: MENIMTLPKIKQVRAWFTGGATAEKGAGGGDYHDQGANHWIDDHIATPMSKYREYEQSRQSFGINVLGTLIVEVEAENGQTGFAVSTAGEMGCFIVEKHLNRFIEGKCVSDIKLIHDQMLNATLYYSGSGGLVMNTISCVDLALWDLFGKVVGLPVYKLLGGAVRDEIQFYATGARPDLAKEMGFIGGKMPTHWGPHDGDAGIRKDAAMVADMREKCGEDFWLMLDCWMSQDVNYAIKLAHACAPYNLKWIEECLPPQQYEGYRELKHNAPAGMMVTSGEHHGTLQSFRTLSETGIDIMQPDVGWCGGLTTLVEIAAIAKSRGQLVVPHGSSVYSHHAVITFTNTPFSEFLMTSPDCSTMRPQFDPILLNEPVPVNGRIHKSVLDKPGFGVELNRDCNLNPPYSH.

2 residues coordinate substrate: His-33 and Arg-59. Asp-226, Glu-252, and Glu-280 together coordinate Mg(2+). Residue His-329 is the Proton acceptor of the active site. Residue Glu-349 coordinates substrate.

The protein belongs to the mandelate racemase/muconate lactonizing enzyme family. RhamD subfamily. In terms of assembly, homooctamer; tetramer of dimers. The cofactor is Mg(2+).

It carries out the reaction L-rhamnonate = 2-dehydro-3-deoxy-L-rhamnonate + H2O. Functionally, catalyzes the dehydration of L-rhamnonate to 2-keto-3-deoxy-L-rhamnonate (KDR). This chain is L-rhamnonate dehydratase, found in Escherichia coli O81 (strain ED1a).